The chain runs to 207 residues: 3-demethoxyubiquinol 3-hydroxylase (207 aa).

Residues glutamate 56, glutamate 86, histidine 89, glutamate 138, glutamate 170, and histidine 173 each contribute to the Fe cation site.

It belongs to the COQ7 family. Requires Fe cation as cofactor.

The protein localises to the cell membrane. It carries out the reaction a 5-methoxy-2-methyl-3-(all-trans-polyprenyl)benzene-1,4-diol + AH2 + O2 = a 3-demethylubiquinol + A + H2O. It participates in cofactor biosynthesis; ubiquinone biosynthesis. Functionally, catalyzes the hydroxylation of 2-nonaprenyl-3-methyl-6-methoxy-1,4-benzoquinol during ubiquinone biosynthesis. This Cupriavidus taiwanensis (strain DSM 17343 / BCRC 17206 / CCUG 44338 / CIP 107171 / LMG 19424 / R1) (Ralstonia taiwanensis (strain LMG 19424)) protein is 3-demethoxyubiquinol 3-hydroxylase.